An 82-amino-acid polypeptide reads, in one-letter code: P2Y purinoceptor 2 (82 aa).

Residues 1 to 25 (LPLSYGVVCVLGLCLNVVALYIFLC) form a helical membrane-spanning segment. Topologically, residues 26–35 (RLKTWNASTT) are cytoplasmic. The chain crosses the membrane as a helical span at residues 36–56 (YMFHLAVSDSLYAASLPLLVY). Topologically, residues 57–75 (YYAQGDHWPFSTVLCKLVR) are extracellular. Residues 76-82 (FLFYTNL) form a helical membrane-spanning segment.

It belongs to the G-protein coupled receptor 1 family. As to expression, expressed in brain, heart, stria vascularis and vestibular labyrinth.

The protein resides in the cell membrane. Its function is as follows. Receptor for ATP and UTP coupled to G-proteins that activate a phosphatidylinositol-calcium second messenger system. Not activated by UDP. This Meriones unguiculatus (Mongolian jird) protein is P2Y purinoceptor 2 (P2RY2).